The following is a 342-amino-acid chain: N-acetyl-gamma-glutamyl-phosphate reductase (342 aa).

C146 is an active-site residue.

Belongs to the NAGSA dehydrogenase family. Type 1 subfamily.

The protein localises to the cytoplasm. The enzyme catalyses N-acetyl-L-glutamate 5-semialdehyde + phosphate + NADP(+) = N-acetyl-L-glutamyl 5-phosphate + NADPH + H(+). Its pathway is amino-acid biosynthesis; L-arginine biosynthesis; N(2)-acetyl-L-ornithine from L-glutamate: step 3/4. Functionally, catalyzes the NADPH-dependent reduction of N-acetyl-5-glutamyl phosphate to yield N-acetyl-L-glutamate 5-semialdehyde. This chain is N-acetyl-gamma-glutamyl-phosphate reductase, found in Frankia casuarinae (strain DSM 45818 / CECT 9043 / HFP020203 / CcI3).